We begin with the raw amino-acid sequence, 410 residues long: Elongation factor Tu, chloroplastic (410 aa).

Residues 10-215 (KPHVNIGTIG…NVDSYIPTPE (206 aa)) form the tr-type G domain. The tract at residues 19–26 (GHVDHGKT) is G1. 19–26 (GHVDHGKT) is a GTP binding site. Thr26 is a binding site for Mg(2+). The G2 stretch occupies residues 61–65 (GITIN). The segment at 82 to 85 (DCPG) is G3. GTP contacts are provided by residues 82 to 86 (DCPGH) and 137 to 140 (NKKD). Positions 137–140 (NKKD) are G4. The segment at 175–177 (SAL) is G5.

Belongs to the TRAFAC class translation factor GTPase superfamily. Classic translation factor GTPase family. EF-Tu/EF-1A subfamily.

The protein localises to the plastid. It localises to the chloroplast. The catalysed reaction is GTP + H2O = GDP + phosphate + H(+). Functionally, GTP hydrolase that promotes the GTP-dependent binding of aminoacyl-tRNA to the A-site of ribosomes during protein biosynthesis. The polypeptide is Elongation factor Tu, chloroplastic (tufA) (Oltmannsiellopsis viridis (Marine flagellate)).